Reading from the N-terminus, the 270-residue chain is Undecaprenyl-diphosphatase 1 (270 aa).

The next 7 membrane-spanning stretches (helical) occupy residues Y5–I25, I42–I62, F89–F109, L117–I137, F192–I212, T220–L240, and G250–L270.

It belongs to the UppP family.

Its subcellular location is the cell membrane. The enzyme catalyses di-trans,octa-cis-undecaprenyl diphosphate + H2O = di-trans,octa-cis-undecaprenyl phosphate + phosphate + H(+). Catalyzes the dephosphorylation of undecaprenyl diphosphate (UPP). Confers resistance to bacitracin. The protein is Undecaprenyl-diphosphatase 1 of Bacillus cereus (strain ATCC 10987 / NRS 248).